We begin with the raw amino-acid sequence, 470 residues long: MAATATEKLPQLKSAVDGLTEMSENEKSGFINLVSRYLSGEAQHIEWSKIQTPTDEIVVPYDKMANVSEDASETKYLLDKLVVLKLNGGLGTTMGCTGPKSVIEVRDGLTFLDLIVIQIENLNNKYNCKVPLVLMNSFNTHDDTQKIVEKYTKSNVDIHTFNQSKYPRVVADEFVPWPSKGKTDKDGWYPPGHGDVFPSLMNSGKLDAFLSQGKEYVFIANSDNLGAIVDLKILKHLIQNKNEYCMEVTPKTLADVKGGTLISYEGKVQLLEIAQVPDEHVNEFKSIEKFKIFNTNNLWVNLKAIKKLVEADALKMEIIPNPKEVDGVKVLQLETAAGAAIRFFDNAIGVNVPRSRFLPVKATSDLLLVQSDLYTLVDGFVTRNKARTNPTNPAIELGPEFKKVASFLSRFKSIPSIVELDSLKVSGDVWFGSGVVLKGKVTVKANAGTKLEIPDNAVLENKDINGPEDL.

The residue at position 2 (A2) is an N-acetylalanine. UTP-binding positions include 86–89, K100, Q163, and G192; that span reads LNGG. 88–89 contacts substrate; that stretch reads GG. Residues H193 and 221 to 223 contribute to the substrate site; that span reads NSD. The UTP site is built by D223 and K361.

Belongs to the UDPGP type 1 family. Expressed in roots, rosette leaves, cauline leaves, stems, flowers and siliques.

It localises to the cytoplasm. It carries out the reaction alpha-D-glucose 1-phosphate + UTP + H(+) = UDP-alpha-D-glucose + diphosphate. Converts glucose 1-phosphate to UDP-glucose, which is the major glycosyl donor for polysaccharides. Acts redundantly with UGP2 and is essential for the synthesis of sucrose, starch and cell wall, and callose deposition. Involved in the regulation of the programmed cell death (PCD) induced by the fungal toxin fumonisin B1 (FB1). In Arabidopsis thaliana (Mouse-ear cress), this protein is UTP--glucose-1-phosphate uridylyltransferase 1.